The primary structure comprises 371 residues: Chitin deacetylase (371 aa).

The first 20 residues, 1 to 20 (MLCRLFTLFITAALACCVAA), serve as a signal peptide directing secretion. The tract at residues 73-112 (PKPEPEPTAVPTMAPEPTTVPPTEPSGTYPPETTPTVEPT) is disordered. 2 stretches are compositionally biased toward low complexity: residues 79-89 (PTAVPTMAPEP) and 102-112 (PPETTPTVEPT). The cysteines at positions 164 and 358 are disulfide-linked. Residue N167 is glycosylated (N-linked (GlcNAc...) asparagine). A NodB homology domain is found at 168 to 353 (GTIALTFDDG…EIKKRGLRAV (186 aa)). D175 serves as the catalytic Proton acceptor. D175 lines the acetate pocket. Positions 176, 228, and 232 each coordinate Co(2+). N-linked (GlcNAc...) asparagine glycosylation is present at N239. An acetate-binding site is contributed by Y270. H327 (proton donor) is an active-site residue.

This sequence belongs to the polysaccharide deacetylase family. Requires Co(2+) as cofactor.

The enzyme catalyses [(1-&gt;4)-N-acetyl-beta-D-glucosaminyl](n) + n H2O = chitosan + n acetate. Hydrolyzes the N-acetamido groups of N-acetyl-D-glucosamine residues in chitin to form chitosan and acetate. The sequence is that of Chitin deacetylase from Arthroderma benhamiae (strain ATCC MYA-4681 / CBS 112371) (Trichophyton mentagrophytes).